The following is a 211-amino-acid chain: Superoxide dismutase [Cu-Zn], chloroplastic (211 aa).

The transit peptide at 1-57 (MQAILAAAMAAQTLLFSATAPPASLFQSPSSARPFHSLRLAAGPAGAAAARALVVAD) directs the protein to the chloroplast. 3 residues coordinate Cu cation: H103, H105, and H120. The cysteines at positions 114 and 203 are disulfide-linked. H120, H128, H137, and D140 together coordinate Zn(2+). H177 lines the Cu cation pocket.

It belongs to the Cu-Zn superoxide dismutase family. Homotetramer. Cu cation serves as cofactor. It depends on Zn(2+) as a cofactor.

The protein resides in the plastid. It is found in the chloroplast. The enzyme catalyses 2 superoxide + 2 H(+) = H2O2 + O2. Its function is as follows. Destroys radicals which are normally produced within the cells and which are toxic to biological systems. The polypeptide is Superoxide dismutase [Cu-Zn], chloroplastic (SODCP) (Oryza sativa subsp. japonica (Rice)).